We begin with the raw amino-acid sequence, 479 residues long: Ribulose bisphosphate carboxylase large chain 2 (479 aa).

Residues Asn-116 and Thr-166 each coordinate substrate. Lys-168 (proton acceptor) is an active-site residue. Lys-170 is a binding site for substrate. Mg(2+) is bound by residues Lys-194, Asp-196, and Glu-197. Lys-194 is subject to N6-carboxylysine. The active-site Proton acceptor is His-287. Substrate is bound by residues Arg-288, His-320, and Ser-372.

It belongs to the RuBisCO large chain family. Type I subfamily. Heterohexadecamer of 8 large chains and 8 small chains. It depends on Mg(2+) as a cofactor.

It catalyses the reaction 2 (2R)-3-phosphoglycerate + 2 H(+) = D-ribulose 1,5-bisphosphate + CO2 + H2O. It carries out the reaction D-ribulose 1,5-bisphosphate + O2 = 2-phosphoglycolate + (2R)-3-phosphoglycerate + 2 H(+). Its function is as follows. RuBisCO catalyzes two reactions: the carboxylation of D-ribulose 1,5-bisphosphate, the primary event in carbon dioxide fixation, as well as the oxidative fragmentation of the pentose substrate. Both reactions occur simultaneously and in competition at the same active site. This Bradyrhizobium sp. (strain ORS 278) protein is Ribulose bisphosphate carboxylase large chain 2.